Here is a 97-residue protein sequence, read N- to C-terminus: Small ribosomal subunit protein bS20 (97 aa).

This sequence belongs to the bacterial ribosomal protein bS20 family.

In terms of biological role, binds directly to 16S ribosomal RNA. The sequence is that of Small ribosomal subunit protein bS20 from Prochlorococcus marinus (strain MIT 9215).